The following is a 274-amino-acid chain: uncharacterized protein (274 aa).

Basic and acidic residues predominate over residues 1 to 20; that stretch reads MSLEKSLDEIINERTNGFDH. 3 disordered regions span residues 1–63, 148–217, and 230–274; these read MSLE…HDLD, NLKG…EDLD, and ASTV…MEAV. Over residues 21–44 the composition is skewed to basic residues; it reads KHSRRRGSQNRISKKSRLTYKFKR. A compositionally biased stretch (basic and acidic residues) spans 45-63; sequence ASKEHNSSPDDGPWQHDLD. The 77-residue stretch at 85–161 folds into the RRM domain; the sequence is FGVRVENLHY…SEIQISKKSP (77 aa). The segment covering 148–160 has biased composition (polar residues); it reads NLKGSEIQISKKS. 2 stretches are compositionally biased toward low complexity: residues 181–190 and 200–211; these read SSRSNRGFNR and RSSSKKSSNNSI. Over residues 230–245 the composition is skewed to polar residues; it reads ASTVSSHSSQDFTPSI. The span at 263–274 shows a compositional bias: acidic residues; the sequence is LTEEMDLQMEAV.

This is an uncharacterized protein from Schizosaccharomyces pombe (strain 972 / ATCC 24843) (Fission yeast).